The chain runs to 62 residues: Photosystem II reaction center protein Z (62 aa).

2 helical membrane passes run 8-28 (TLFA…VVFA) and 41-61 (FSGV…NSFV).

Belongs to the PsbZ family. As to quaternary structure, PSII is composed of 1 copy each of membrane proteins PsbA, PsbB, PsbC, PsbD, PsbE, PsbF, PsbH, PsbI, PsbJ, PsbK, PsbL, PsbM, PsbT, PsbY, PsbZ, Psb30/Ycf12, at least 3 peripheral proteins of the oxygen-evolving complex and a large number of cofactors. It forms dimeric complexes.

It localises to the plastid. Its subcellular location is the chloroplast thylakoid membrane. Functionally, may control the interaction of photosystem II (PSII) cores with the light-harvesting antenna, regulates electron flow through the 2 photosystem reaction centers. PSII is a light-driven water plastoquinone oxidoreductase, using light energy to abstract electrons from H(2)O, generating a proton gradient subsequently used for ATP formation. The sequence is that of Photosystem II reaction center protein Z from Oltmannsiellopsis viridis (Marine flagellate).